Here is a 355-residue protein sequence, read N- to C-terminus: Protein RecA (355 aa).

67–74 (GPESSGKT) provides a ligand contact to ATP. The disordered stretch occupies residues 331–355 (NQDDKPDFTPAAHEVDEGSEAKENF).

The protein belongs to the RecA family.

The protein localises to the cytoplasm. In terms of biological role, can catalyze the hydrolysis of ATP in the presence of single-stranded DNA, the ATP-dependent uptake of single-stranded DNA by duplex DNA, and the ATP-dependent hybridization of homologous single-stranded DNAs. It interacts with LexA causing its activation and leading to its autocatalytic cleavage. The chain is Protein RecA from Erwinia tasmaniensis (strain DSM 17950 / CFBP 7177 / CIP 109463 / NCPPB 4357 / Et1/99).